The primary structure comprises 512 residues: Bifunctional purine biosynthesis protein PurH (512 aa).

The MGS-like domain maps to 1-150 (MIGEERVVRA…KNFPAVLVLV (150 aa)).

This sequence belongs to the PurH family.

The enzyme catalyses (6R)-10-formyltetrahydrofolate + 5-amino-1-(5-phospho-beta-D-ribosyl)imidazole-4-carboxamide = 5-formamido-1-(5-phospho-D-ribosyl)imidazole-4-carboxamide + (6S)-5,6,7,8-tetrahydrofolate. It carries out the reaction IMP + H2O = 5-formamido-1-(5-phospho-D-ribosyl)imidazole-4-carboxamide. The protein operates within purine metabolism; IMP biosynthesis via de novo pathway; 5-formamido-1-(5-phospho-D-ribosyl)imidazole-4-carboxamide from 5-amino-1-(5-phospho-D-ribosyl)imidazole-4-carboxamide (10-formyl THF route): step 1/1. It functions in the pathway purine metabolism; IMP biosynthesis via de novo pathway; IMP from 5-formamido-1-(5-phospho-D-ribosyl)imidazole-4-carboxamide: step 1/1. In Chloroflexus aurantiacus (strain ATCC 29366 / DSM 635 / J-10-fl), this protein is Bifunctional purine biosynthesis protein PurH.